Consider the following 240-residue polypeptide: 2,3,4,5-tetrahydropyridine-2,6-dicarboxylate N-acetyltransferase (240 aa).

Belongs to the transferase hexapeptide repeat family. DapH subfamily.

The catalysed reaction is (S)-2,3,4,5-tetrahydrodipicolinate + acetyl-CoA + H2O = L-2-acetamido-6-oxoheptanedioate + CoA. Its pathway is amino-acid biosynthesis; L-lysine biosynthesis via DAP pathway; LL-2,6-diaminopimelate from (S)-tetrahydrodipicolinate (acetylase route): step 1/3. In terms of biological role, catalyzes the transfer of an acetyl group from acetyl-CoA to tetrahydrodipicolinate. The protein is 2,3,4,5-tetrahydropyridine-2,6-dicarboxylate N-acetyltransferase of Shouchella clausii (strain KSM-K16) (Alkalihalobacillus clausii).